A 136-amino-acid polypeptide reads, in one-letter code: Ribonuclease P protein component (136 aa).

Residues Arg116 to Ala136 are disordered. A compositionally biased stretch (polar residues) spans Ala126–Ala136.

It belongs to the RnpA family. In terms of assembly, consists of a catalytic RNA component (M1 or rnpB) and a protein subunit.

The catalysed reaction is Endonucleolytic cleavage of RNA, removing 5'-extranucleotides from tRNA precursor.. Its function is as follows. RNaseP catalyzes the removal of the 5'-leader sequence from pre-tRNA to produce the mature 5'-terminus. It can also cleave other RNA substrates such as 4.5S RNA. The protein component plays an auxiliary but essential role in vivo by binding to the 5'-leader sequence and broadening the substrate specificity of the ribozyme. In Pseudarthrobacter chlorophenolicus (strain ATCC 700700 / DSM 12829 / CIP 107037 / JCM 12360 / KCTC 9906 / NCIMB 13794 / A6) (Arthrobacter chlorophenolicus), this protein is Ribonuclease P protein component.